We begin with the raw amino-acid sequence, 311 residues long: Aspartate carbamoyltransferase catalytic subunit (311 aa).

Carbamoyl phosphate is bound by residues R55 and T56. K85 is an L-aspartate binding site. Residues R106, H135, and Q138 each coordinate carbamoyl phosphate. Positions 168 and 230 each coordinate L-aspartate. Residues L268 and P269 each coordinate carbamoyl phosphate.

This sequence belongs to the aspartate/ornithine carbamoyltransferase superfamily. ATCase family. As to quaternary structure, heterododecamer (2C3:3R2) of six catalytic PyrB chains organized as two trimers (C3), and six regulatory PyrI chains organized as three dimers (R2).

The catalysed reaction is carbamoyl phosphate + L-aspartate = N-carbamoyl-L-aspartate + phosphate + H(+). It participates in pyrimidine metabolism; UMP biosynthesis via de novo pathway; (S)-dihydroorotate from bicarbonate: step 2/3. Catalyzes the condensation of carbamoyl phosphate and aspartate to form carbamoyl aspartate and inorganic phosphate, the committed step in the de novo pyrimidine nucleotide biosynthesis pathway. The protein is Aspartate carbamoyltransferase catalytic subunit of Klebsiella pneumoniae (strain 342).